We begin with the raw amino-acid sequence, 326 residues long: Meso-diaminopimelate D-dehydrogenase (326 aa).

Residues 11–14 (YGNL), 35–37 (TRR), 69–72 (CGGS), 92–94 (SFD), and 121–125 (VGWDP) contribute to the NADP(+) site. Substrate-binding positions include aspartate 94, aspartate 124, tryptophan 148, 154–155 (QG), threonine 173, arginine 199, histidine 249, and asparagine 276.

This sequence belongs to the diaminopimelate dehydrogenase family. Homodimer.

The enzyme catalyses meso-2,6-diaminopimelate + NADP(+) + H2O = (S)-2-amino-6-oxoheptanedioate + NH4(+) + NADPH + H(+). Its pathway is amino-acid biosynthesis; L-lysine biosynthesis via DAP pathway; DL-2,6-diaminopimelate from (S)-tetrahydrodipicolinate: step 1/1. The enzyme is completely inhibited by p-chloromercuribenzoate and HgCl(2) in vitro. Thioglycollate, L-cysteine and Cu(2+) also strongly inhibit the enzyme. Catalyzes the reversible NADPH-dependent reductive amination of L-2-amino-6-oxopimelate, the acyclic form of L-tetrahydrodipicolinate, to generate the meso compound, D,L-2,6-diaminopimelate. Probably plays a role in lysine biosynthesis. Is highly specific for meso-2,6-diaminopimelate as the electron donor, since the following amino acids are inert for the oxidative deamination reaction: DL-2-aminopimelate, D-glutamate, L-glutamate, D-aspartate, L-aspartate, D-alanine, L-alanine, D-valine, L-valine, D-lysine, L-lysine, D-phenylalanine, L-phenylalanine, D-leucine, L-leucine, D-threonine, L-threonine, D-serine, L-serine, D-tryptophan, L-tryptophan, D-cysteine, L-cysteine, D-histidine, L-histidine, D-methionine, D-arginine, D-proline, D-asparagine, D-glutamine, D-isoleucine and D-ornithine. Moreover, exclusively uses NADP as the electron acceptor for the oxidative deamination of meso-DAP; NAD is inert. This Ureibacillus thermosphaericus protein is Meso-diaminopimelate D-dehydrogenase (ddh).